A 258-amino-acid chain; its full sequence is MEEEDHATFAVGNPSHRFDRPLIRRSSDSISNLPDEILHHILSFIPETNLVIRTSVLSKRWRHVWSKTPHLSFEWLMVSPKLINKTLASYTASKITSFHLCTSYSYEAGHVHSSIEFAMSHNVDNLSLAFSSFPPCNKFPDFFYTSSSLKRVELRSASLTPSCIVSWTSLRDLSLTRCNLSDKSFLKILSGCPILESLSLKFCESLKYLDLSKSLRLTRLEIERRSCFREPMQSMQIVAPHIHYLRLRDSEAHCTFLV.

The 50-residue stretch at 27-76 (SDSISNLPDEILHHILSFIPETNLVIRTSVLSKRWRHVWSKTPHLSFEWL) folds into the F-box domain. LRR repeat units lie at residues 101 to 130 (CTSY…SLAF), 136 to 161 (CNKF…SLTP), 177 to 202 (RCNL…SLKF), and 224 to 249 (RRSC…RLRD).

The polypeptide is F-box/LRR-repeat protein 25 (FBL25) (Arabidopsis thaliana (Mouse-ear cress)).